The chain runs to 316 residues: MSNKLSQLKEFTTIVADTGDITAIKDFLPQDATTNPSLMLKAAQIPEYAPFLDQAVAWAKTQSNDKDQQVLDAGDKLAVIVGTEILKYVPGRISTEVDARLSFDKEATLAKARKLIALYEEAGVSRDRVLIKAASTWEGIKAAEELEKEGINCNLTLLFSFAQAQACAEAGVYLISPFVGRILDWYKKSTGQEYTAETDPGVVSVTEIYNYYKQHGYQTVVMGASFRNIGEIEQLAGCDRLTISPNLLEELKKDEGKLERKLLPTTDVKAAPAAITEAAFRWAMNEDAMATEKLSEGIRNFAADQRKLEETLRSML.

Lys-132 acts as the Schiff-base intermediate with substrate in catalysis.

This sequence belongs to the transaldolase family. Type 1 subfamily. As to quaternary structure, homodimer.

The protein localises to the cytoplasm. The enzyme catalyses D-sedoheptulose 7-phosphate + D-glyceraldehyde 3-phosphate = D-erythrose 4-phosphate + beta-D-fructose 6-phosphate. The protein operates within carbohydrate degradation; pentose phosphate pathway; D-glyceraldehyde 3-phosphate and beta-D-fructose 6-phosphate from D-ribose 5-phosphate and D-xylulose 5-phosphate (non-oxidative stage): step 2/3. Its function is as follows. Transaldolase is important for the balance of metabolites in the pentose-phosphate pathway. This is Transaldolase from Marinomonas sp. (strain MWYL1).